Consider the following 257-residue polypeptide: Indole-3-glycerol phosphate synthase (257 aa).

The protein belongs to the TrpC family.

It carries out the reaction 1-(2-carboxyphenylamino)-1-deoxy-D-ribulose 5-phosphate + H(+) = (1S,2R)-1-C-(indol-3-yl)glycerol 3-phosphate + CO2 + H2O. The protein operates within amino-acid biosynthesis; L-tryptophan biosynthesis; L-tryptophan from chorismate: step 4/5. The chain is Indole-3-glycerol phosphate synthase from Chlorobium chlorochromatii (strain CaD3).